The primary structure comprises 312 residues: MISANRPIINLDLDLLRTFVAVADLNTFAAAAAAVCRTQSAVSQQMQRLEQLVGKELFARHGRNKLLTEHGIQLLGYARKILRFNDEACSSLMFSNLQGVLTIGASDESADTILPFLLNRVSSVYPKLALDVRVKRNAYMAEMLESQEVDLMVTTHRPSAFKALNLRTSPTHWYCAAEYILQKGEPIPLVLLDDPSPFRDMVLATLNKADIPWRLAYVASTLPAVRAAVKAGLGVTARPVEMMSPDLRVLSGVDGLPPLPDTEYLLCYDPSSNNELAQVIYQAMESYHNPWQYSPMSAPEGDDSLLIERDIE.

An HTH lysR-type domain is found at 11 to 68; it reads LDLDLLRTFVAVADLNTFAAAAAAVCRTQSAVSQQMQRLEQLVGKELFARHGRNKLLT. A DNA-binding region (H-T-H motif) is located at residues 28–47; that stretch reads FAAAAAAVCRTQSAVSQQMQ.

It belongs to the LysR transcriptional regulatory family.

Its function is as follows. Not known, does not seem to act on the proton translocating NADH dehydrogenase genes (nuoA-N) which are part of the lrhA operon. This Escherichia coli (strain K12) protein is Probable HTH-type transcriptional regulator LrhA (lrhA).